Reading from the N-terminus, the 158-residue chain is Sorbin and SH3 domain-containing protein 2 (158 aa).

Residues 1–46 form the SoHo domain; the sequence is MRAATPLQTVDRPKDWYKTMFKQIHMVHKPDDDTDMYNTPYTYNAG. The segment at 28–158 is disordered; that stretch reads HKPDDDTDMY…TKPQAGRRKV (131 aa). A compositionally biased stretch (polar residues) spans 50–66; the sequence is SPYSAQSHPAAKTQTYR. The span at 71 to 81 shows a compositional bias: basic and acidic residues; sequence SHSDNGTDAFK. Position 73 is a phosphoserine (serine 73). Residues 86 to 99 show a composition bias toward pro residues; it reads PVPPPHVPPPVPPL. Residues 100 to 136 are compositionally biased toward basic and acidic residues; the sequence is RPRDRSSTEKHDWDPPDRKVDTRKFRSEPRSIFEYEP. Alanine 153 bears the Alanine amide mark.

Interacts with ABL1/c-Abl, ABL2/v-Abl/Arg, ACTN, AKT1, CBL, PALLD and PAK1. Interacts with ABL, CBL, DNM1, DNM2, FLOT1, AFDN, PTK2B/PYK2, SAPAP, SPTAN1, SYNJ1, SYNJ2, VCL/vinculin, and WASF. Interacts with PTPN12 and WASF1 via its SH3 domains; this interaction may mediate the partial PTPN12 and WASF1 translocation to focal adhesion sites. Post-translationally, ubiquitinated by CBL. Dephosphorylated by PTPN12. As to expression, expressed in duodenum.

It localises to the cytoplasm. The protein resides in the perinuclear region. Its subcellular location is the apical cell membrane. The protein localises to the cell junction. It is found in the focal adhesion. It localises to the cell projection. The protein resides in the lamellipodium. Functionally, adapter protein that plays a role in the assembling of signaling complexes, being a link between ABL kinases and actin cytoskeleton. Can form complex with ABL1 and CBL, thus promoting ubiquitination and degradation of ABL1 or with AKT1 and PAK1, thus mediating AKT1-mediated activation of PAK1. May play a role in the regulation of pancreatic cell adhesion, possibly by acting on WASF1 phosphorylation, enhancing phosphorylation by ABL1, as well as dephosphorylation by PTPN12. Increases water and sodium absorption in the intestine and gall-bladder. The protein is Sorbin and SH3 domain-containing protein 2 (SORBS2) of Sus scrofa (Pig).